The chain runs to 263 residues: 3'-5' ssDNA/RNA exonuclease TatD (263 aa).

Glutamate 92, histidine 128, and histidine 153 together coordinate a divalent metal cation.

This sequence belongs to the metallo-dependent hydrolases superfamily. TatD-type hydrolase family. TatD subfamily. Monomer. Requires Mg(2+) as cofactor.

The protein resides in the cytoplasm. 3'-5' exonuclease that prefers single-stranded DNA and RNA. May play a role in the H(2)O(2)-induced DNA damage repair. This is 3'-5' ssDNA/RNA exonuclease TatD from Rahnella sp. (strain Y9602).